The sequence spans 84 residues: U8-theraphotoxin-Hhn1c 1 (84 aa).

The N-terminal stretch at methionine 1 to cysteine 21 is a signal peptide. Cystine bridges form between cysteine 23-cysteine 35, cysteine 29-cysteine 44, cysteine 34-cysteine 67, cysteine 54-cysteine 75, and cysteine 69-cysteine 81.

Belongs to the AVIT (prokineticin) family. In terms of tissue distribution, expressed by the venom gland.

It is found in the secreted. The sequence is that of U8-theraphotoxin-Hhn1c 1 from Cyriopagopus hainanus (Chinese bird spider).